We begin with the raw amino-acid sequence, 643 residues long: Pescadillo homolog (643 aa).

Positions 319-412 (KLKTLFKGLK…RLLPTNKYFM (94 aa)) constitute a BRCT domain. Disordered stretches follow at residues 437-475 (AARKAAEGEEEEETFEPAEVNADHEHISDDEEVQDPENE), 492-571 (TDSL…YREN), and 609-643 (DKNARLLANKRERIEKQKRAEQMEKQKQQRKQILA). Acidic residues predominate over residues 464–475 (SDDEEVQDPENE). Residues 492-518 (TDSLNSGKKEGADDATDNGKDAAEKKQ) show a composition bias toward basic and acidic residues. Residues 524–544 (GESDDEDEEEEDDDDGEEEED) are compositionally biased toward acidic residues. The stretch at 569 to 643 (RENEAEKKIV…QKQQRKQILA (75 aa)) forms a coiled coil. Basic and acidic residues predominate over residues 609–635 (DKNARLLANKRERIEKQKRAEQMEKQK).

The protein belongs to the pescadillo family.

The protein localises to the nucleus. It localises to the nucleolus. It is found in the nucleoplasm. Required for maturation of ribosomal RNAs and formation of the large ribosomal subunit. The sequence is that of Pescadillo homolog from Anopheles gambiae (African malaria mosquito).